The primary structure comprises 476 residues: Serine--tRNA ligase (476 aa).

280–282 (TAE) lines the L-serine pocket. ATP is bound at residue 311 to 313 (RAE). Glu-334 lines the L-serine pocket. 401–404 (EISS) contacts ATP. L-serine is bound at residue Ser-436.

This sequence belongs to the class-II aminoacyl-tRNA synthetase family. Type-1 seryl-tRNA synthetase subfamily. In terms of assembly, homodimer. The tRNA molecule binds across the dimer.

Its subcellular location is the cytoplasm. The enzyme catalyses tRNA(Ser) + L-serine + ATP = L-seryl-tRNA(Ser) + AMP + diphosphate + H(+). The catalysed reaction is tRNA(Sec) + L-serine + ATP = L-seryl-tRNA(Sec) + AMP + diphosphate + H(+). It functions in the pathway aminoacyl-tRNA biosynthesis; selenocysteinyl-tRNA(Sec) biosynthesis; L-seryl-tRNA(Sec) from L-serine and tRNA(Sec): step 1/1. Functionally, catalyzes the attachment of serine to tRNA(Ser). Is also able to aminoacylate tRNA(Sec) with serine, to form the misacylated tRNA L-seryl-tRNA(Sec), which will be further converted into selenocysteinyl-tRNA(Sec). The polypeptide is Serine--tRNA ligase (Rhodopseudomonas palustris (strain HaA2)).